Reading from the N-terminus, the 128-residue chain is Large ribosomal subunit protein uL22 (128 aa).

This sequence belongs to the universal ribosomal protein uL22 family. As to quaternary structure, part of the 50S ribosomal subunit.

Functionally, this protein binds specifically to 23S rRNA; its binding is stimulated by other ribosomal proteins, e.g. L4, L17, and L20. It is important during the early stages of 50S assembly. It makes multiple contacts with different domains of the 23S rRNA in the assembled 50S subunit and ribosome. Its function is as follows. The globular domain of the protein is located near the polypeptide exit tunnel on the outside of the subunit, while an extended beta-hairpin is found that lines the wall of the exit tunnel in the center of the 70S ribosome. In Prochlorococcus marinus (strain AS9601), this protein is Large ribosomal subunit protein uL22.